The primary structure comprises 383 residues: L-lactate dehydrogenase (383 aa).

The FMN hydroxy acid dehydrogenase domain maps to 1–380 (MIISSGNDYR…NADCLVQAIK (380 aa)). Tyr24 provides a ligand contact to substrate. FMN contacts are provided by Ser106 and Gln127. Tyr129 provides a ligand contact to substrate. Residue Thr155 participates in FMN binding. Arg164 provides a ligand contact to substrate. Lys251 lines the FMN pocket. Catalysis depends on His275, which acts as the Proton acceptor. Arg278 contacts substrate. Position 306–330 (306–330 (DSGIRNGLDVVRMLALGADTVLLGR)) interacts with FMN.

The protein belongs to the FMN-dependent alpha-hydroxy acid dehydrogenase family. It depends on FMN as a cofactor.

Its subcellular location is the cell inner membrane. It carries out the reaction (S)-lactate + A = pyruvate + AH2. Its function is as follows. Catalyzes the conversion of L-lactate to pyruvate. Is coupled to the respiratory chain. In Acinetobacter baumannii (strain AB307-0294), this protein is L-lactate dehydrogenase.